The sequence spans 235 residues: Post-translational flagellin modification protein B (235 aa).

The protein belongs to the CMP-NeuNAc synthase family.

Functionally, required for biosynthesis of LAH modification in the post-translational modification of Campylobacter coli flagellin. The sequence is that of Post-translational flagellin modification protein B (ptmB) from Campylobacter coli.